A 610-amino-acid polypeptide reads, in one-letter code: Zinc metalloproteinase-disintegrin-like VAP1 (610 aa).

An N-terminal signal peptide occupies residues 1 to 20 (MIQVLLVTISLAVFPYQGSS). A propeptide spanning residues 21 to 189 (VILESGNVND…KKASQSNLTP (169 aa)) is cleaved from the precursor. Glu-190 carries the post-translational modification Pyrrolidone carboxylic acid (Glu). Positions 199–395 (KYVKLFLVAD…NMPQCILKKP (197 aa)) constitute a Peptidase M12B domain. Asn-218 is a glycosylation site (N-linked (GlcNAc...) asparagine). Disulfide bonds link Cys-310–Cys-390, Cys-350–Cys-374, and Cys-352–Cys-357. Residue His-335 coordinates Zn(2+). Residues 335-346 (HEMGHNLGMDHD) carry the Metal-binding motif. Catalysis depends on Glu-336, which acts as the Proton acceptor. 2 residues coordinate Zn(2+): His-339 and His-345. Residues 403-488 (PAVCGNYFVE…AECTDRFQRN (86 aa)) enclose the Disintegrin domain. Val-405, Asn-408, Phe-410, Glu-412, Glu-415, and Asp-418 together coordinate Ca(2+). Intrachain disulfides connect Cys-406-Cys-435, Cys-417-Cys-430, Cys-419-Cys-425, Cys-429-Cys-452, Cys-443-Cys-449, Cys-448-Cys-474, Cys-461-Cys-481, Cys-468-Cys-499, Cys-492-Cys-504, Cys-511-Cys-561, Cys-526-Cys-572, Cys-539-Cys-549, Cys-556-Cys-598, and Cys-592-Cys-603. Residues 467-469 (ECD) carry the D/ECD-tripeptide motif. Residues Asp-469, Met-470, Asp-472, Asp-483, and Arg-484 each contribute to the Ca(2+) site.

Belongs to the venom metalloproteinase (M12B) family. P-III subfamily. P-IIIc sub-subfamily. In terms of assembly, homodimer; disulfide-linked. Zn(2+) is required as a cofactor. The N-terminus is blocked. In terms of tissue distribution, expressed by the venom gland.

The protein localises to the secreted. Its activity is regulated as follows. Inhibited by EDTA and EGTA, but not by PMSF. Functionally, zinc metalloprotease that has fibrinogenolytic and hemorrhagic activities. It induces apoptosis in vascular endothelial cells (VEC), without degrading extracellular matrix (it cannot cleave collagen) or inhibiting adhesion of VEC. VAP1-induced apoptosis is inhibited by antibodies for integrin alpha-3, alpha-6, beta-1 and CD9. Apoptosis is accompanied by severe cell fragmentation, which is controlled by caspases. The protein is Zinc metalloproteinase-disintegrin-like VAP1 of Crotalus atrox (Western diamondback rattlesnake).